The sequence spans 348 residues: Holliday junction branch migration complex subunit RuvB (348 aa).

The interval 4 to 184 (ADRLIAASGR…FGIVQRLEFY (181 aa)) is large ATPase domain (RuvB-L). ATP is bound by residues I23, R24, G65, K68, T69, T70, 131 to 133 (EDF), R174, Y184, and R221. T69 contacts Mg(2+). The interval 185-255 (SDKDLATIVS…VADLALNLLD (71 aa)) is small ATPAse domain (RuvB-S). The interval 258–348 (ERGFDHSDRR…GADFSEAGDE (91 aa)) is head domain (RuvB-H). Residues R294, R313, and R318 each contribute to the DNA site.

Belongs to the RuvB family. In terms of assembly, homohexamer. Forms an RuvA(8)-RuvB(12)-Holliday junction (HJ) complex. HJ DNA is sandwiched between 2 RuvA tetramers; dsDNA enters through RuvA and exits via RuvB. An RuvB hexamer assembles on each DNA strand where it exits the tetramer. Each RuvB hexamer is contacted by two RuvA subunits (via domain III) on 2 adjacent RuvB subunits; this complex drives branch migration. In the full resolvosome a probable DNA-RuvA(4)-RuvB(12)-RuvC(2) complex forms which resolves the HJ.

The protein localises to the cytoplasm. The catalysed reaction is ATP + H2O = ADP + phosphate + H(+). Functionally, the RuvA-RuvB-RuvC complex processes Holliday junction (HJ) DNA during genetic recombination and DNA repair, while the RuvA-RuvB complex plays an important role in the rescue of blocked DNA replication forks via replication fork reversal (RFR). RuvA specifically binds to HJ cruciform DNA, conferring on it an open structure. The RuvB hexamer acts as an ATP-dependent pump, pulling dsDNA into and through the RuvAB complex. RuvB forms 2 homohexamers on either side of HJ DNA bound by 1 or 2 RuvA tetramers; 4 subunits per hexamer contact DNA at a time. Coordinated motions by a converter formed by DNA-disengaged RuvB subunits stimulates ATP hydrolysis and nucleotide exchange. Immobilization of the converter enables RuvB to convert the ATP-contained energy into a lever motion, pulling 2 nucleotides of DNA out of the RuvA tetramer per ATP hydrolyzed, thus driving DNA branch migration. The RuvB motors rotate together with the DNA substrate, which together with the progressing nucleotide cycle form the mechanistic basis for DNA recombination by continuous HJ branch migration. Branch migration allows RuvC to scan DNA until it finds its consensus sequence, where it cleaves and resolves cruciform DNA. This is Holliday junction branch migration complex subunit RuvB from Pseudomonas putida (strain W619).